Reading from the N-terminus, the 317-residue chain is Probable cell division protein WhiA (317 aa).

The H-T-H motif DNA-binding region spans 276–310 (TLKELGEMVSGGKISKSGINHRLRKIDDIAEKLRA).

The protein belongs to the WhiA family.

Involved in cell division and chromosome segregation. The chain is Probable cell division protein WhiA from Bacillus thuringiensis (strain Al Hakam).